A 22-amino-acid polypeptide reads, in one-letter code: leu leader peptide (22 aa).

A disordered region spans residues 1–22; sequence MLHHMTSRANLLLLRRGGSQRS. Residues 11–22 show a composition bias toward low complexity; the sequence is LLLLRRGGSQRS.

In terms of biological role, involved in control of the biosynthesis of leucine. The protein is leu leader peptide (leuL) of Corynebacterium glutamicum (strain ATCC 13032 / DSM 20300 / JCM 1318 / BCRC 11384 / CCUG 27702 / LMG 3730 / NBRC 12168 / NCIMB 10025 / NRRL B-2784 / 534).